The sequence spans 5430 residues: Microtubule-actin cross-linking factor 1 (5430 aa).

Positions 1 to 47 (MSSSDEETLSERSCRSERSCRSERSYRSERSGSLSPCPPGDTLPWNL) are disordered. The actin-binding stretch occupies residues 1–295 (MSSSDEETLS…VITYVSSIYD (295 aa)). Ser-4 bears the Phosphoserine mark. Positions 9-30 (LSERSCRSERSCRSERSYRSER) are enriched in basic and acidic residues. Ser-35 and Ser-57 each carry phosphoserine. Calponin-homology (CH) domains follow at residues 78–181 (RVQK…LHFQ) and 194–298 (MSAK…DAFP). LRR repeat units follow at residues 148–171 (QRQV…LTLG) and 240–264 (LVDM…VAER). Phosphoserine is present on Ser-280. LRR repeat units follow at residues 377 to 399 (LYKL…YHPN) and 441 to 464 (LNCE…LESG). Positions 868-925 (KSTLSVKAICDYRQIEITICKNDECVLEDNSQRTKWKVISPTGNEAMVPSVCLLIPPP) constitute an SH3 domain. One copy of the LRR 5 repeat lies at 1050–1073 (ISELKNIRLRLEECEQRLLKQIQS). The residue at position 1122 (Ser-1122) is a Phosphoserine. 3 LRR repeats span residues 1128–1154 (ATTL…VCLN), 1187–1210 (PADL…VKDK), and 1257–1282 (HRVI…DYRA). Residues Ser-1367 and Ser-1376 each carry the phosphoserine modification. LRR repeat units follow at residues 1579-1602 (QQEL…IQNH) and 1629-1653 (LTAL…TREA). 2 Spectrin repeats span residues 1816 to 1891 (ELQK…NFEE) and 1933 to 2041 (QYQQ…ALLQ). At Ser-1860 the chain carries Phosphoserine. The stretch at 1869-1891 (KGDLRFVTISGQKVLETENNFEE) is one LRR 11 repeat. LRR repeat units follow at residues 2058–2083 (LQSM…LIQE) and 2194–2220 (IQEL…ALGS). The Spectrin 3 repeat unit spans residues 2399–2507 (RMEEVQKEAS…TVARQKQLEE (109 aa)). Ser-2429 and Ser-2454 each carry phosphoserine. LRR repeat units follow at residues 2444–2467 (KAFL…LAGL), 2534–2557 (GVLG…QFML), and 2702–2725 (KKRL…RMNR). Spectrin repeat units lie at residues 2733–2837 (TQQF…SRLK) and 2842–2945 (KAQK…SLEE). 2 positions are modified to phosphoserine: Ser-2769 and Ser-2895. LRR repeat units lie at residues 2984-3009 (NKNL…YLRD), 3105-3127 (NKIQ…MLEE), and 3214-3237 (KEQV…LIQS). Spectrin repeat units follow at residues 3169 to 3274 (EDFY…QLQE), 3281 to 3383 (KFQD…QLED), 3388 to 3491 (AKQF…SLLE), 3714 to 3818 (RSQQ…ARLE), 3825 to 3927 (NQFW…ALDE), 4047 to 4152 (LAEK…KLED), 4157 to 4261 (AVQY…HKLE), 4267 to 4370 (LGQF…QQLQ), 4375 to 4481 (QAQG…KLEE), 4486 to 4589 (ATEF…RSLD), 4594 to 4700 (RAKQ…KLEE), 4707 to 4808 (QFMD…RLEQ), and 4812 to 4916 (QAEE…QRLE). Thr-3368 carries the phosphothreonine modification. LRR repeat units lie at residues 3737–3761 (MALG…AFSI) and 3846–3870 (AQLP…QLRE). Ser-4074 is modified (phosphoserine). N6-acetyllysine is present on Lys-4252. Residues 4538–4561 (RDQIIELDQTGNQLKFLSQKQDVV) form an LRR 22 repeat. Positions 4993–5023 (PTHAPFIEKSRSGSRKSLNQPTPPPMPILSQ) are disordered. Ser-5009 bears the Phosphoserine mark. EF-hand domains are found at residues 5083–5118 (HKKS…SKFP) and 5119–5154 (TTKL…NKDA). Residues Asp-5096, Asp-5098, Asp-5100, Lys-5102, Glu-5107, Asp-5132, Asp-5134, Asp-5136, Tyr-5138, and Glu-5143 each coordinate Ca(2+). Residues 5159–5231 (TDADKIEDEV…EFLVKNDPCR (73 aa)) enclose the GAR domain. The C-terminal tail stretch occupies residues 5159–5430 (TDADKIEDEV…ASPRTPCPKR (272 aa)). Residues 5247 to 5430 (PEGASQGMTP…ASPRTPCPKR (184 aa)) form a disordered region. A compositionally biased stretch (low complexity) spans 5267–5301 (SSRAASPTRSSSSASQSNHSCTSMPSSPATPASGT). Residue Thr-5296 is modified to Phosphothreonine. Positions 5317–5341 (TFHSSRTSLAGDTSNSSSPASTGAK) are enriched in polar residues. Phosphoserine occurs at positions 5321 and 5334. The segment covering 5352–5366 (SRPGSRAGSRAGSRA) has biased composition (low complexity). Residues 5355 to 5370 (GSRAGSRAGSRASSRR) form a 4 X 4 AA tandem repeats of [GS]-S-R-[AR] region. A phosphoserine mark is found at Ser-5372 and Ser-5375. A compositionally biased stretch (polar residues) spans 5381-5391 (ETQSACSDTSE). Residues 5392-5403 (SSAAGGQGSSRR) are compositionally biased toward low complexity.

This sequence belongs to the plakin or cytolinker family. Interacts with MAPRE1, CLASP1, CLASP2 and GOLGA4. Interacts with AXIN1 and LRP6. Found in a complex composed of MACF1, APC; AXIN1, CTNNB1 and GSK3B. Interacts with CAMSAP3. Phosphorylated on serine residues in the C-terminal tail by GSK3B. Phosphorylation inhibits microtubule-binding and this plays a critical role in bulge stem cell migration and skin wound repair. Wnt-signaling can repress phosphorylation.

It is found in the cytoplasm. The protein localises to the cytoskeleton. It localises to the golgi apparatus. Its subcellular location is the cell membrane. The protein resides in the cell projection. It is found in the ruffle membrane. The protein localises to the membrane. Its function is as follows. F-actin-binding protein which plays a role in cross-linking actin to other cytoskeletal proteins and also binds to microtubules. Plays an important role in ERBB2-dependent stabilization of microtubules at the cell cortex. Acts as a positive regulator of Wnt receptor signaling pathway and is involved in the translocation of AXIN1 and its associated complex (composed of APC, CTNNB1 and GSK3B) from the cytoplasm to the cell membrane. Has actin-regulated ATPase activity and is essential for controlling focal adhesions (FAs) assembly and dynamics. Interaction with CAMSAP3 at the minus ends of non-centrosomal microtubules tethers microtubules minus-ends to actin filaments, regulating focal adhesion size and cell migration. May play role in delivery of transport vesicles containing GPI-linked proteins from the trans-Golgi network through its interaction with GOLGA4. Plays a key role in wound healing and epidermal cell migration. Required for efficient upward migration of bulge cells in response to wounding and this function is primarily rooted in its ability to coordinate microtubule dynamics and polarize hair follicle stem cells. As a regulator of actin and microtubule arrangement and stabilization, it plays an essential role in neurite outgrowth, branching and spine formation during brain development. In Rattus norvegicus (Rat), this protein is Microtubule-actin cross-linking factor 1.